The chain runs to 417 residues: UPF0761 membrane protein Daci_4966 (417 aa).

6 helical membrane passes run 49 to 69 (VLALVPFFTVALALFTAFPIF), 106 to 126 (QLGMAGFSILVITAVALILTI), 146 to 166 (VLIYWAAITLGPLVLGLSLVL), 187 to 207 (FIFDSIEYLALAAGMAGLYHY), 235 to 255 (ALGLYLASVPTYSVIYGTFAT), and 256 to 276 (LPILLIWIYMAWIIVLLGAVV).

The protein belongs to the UPF0761 family.

The protein localises to the cell inner membrane. The sequence is that of UPF0761 membrane protein Daci_4966 from Delftia acidovorans (strain DSM 14801 / SPH-1).